The sequence spans 164 residues: MIITTSRKPSQRTRSLVNDLARVFNFKILNRGKIPLSELIENKDDMIIVEELKGNPGRLKIFNFENNKILSMNLSLKLQREVSGKAFKNSGKLGSKFDKNTEHLKEFFFEYLFKKLSNYKEENFEVVITFKTVDESTFYIEVHKGSENMGPSLKIKTVKILDIE.

The Brix domain maps to 1–164 (MIITTSRKPS…IKTVKILDIE (164 aa)).

In terms of biological role, probably involved in the biogenesis of the ribosome. The chain is Probable Brix domain-containing ribosomal biogenesis protein from Methanococcus maripaludis (strain DSM 14266 / JCM 13030 / NBRC 101832 / S2 / LL).